A 396-amino-acid chain; its full sequence is Elongation factor Tu 1 (396 aa).

The region spanning 10–206 (KPHINVGTIG…VLDSYIPEPQ (197 aa)) is the tr-type G domain. A G1 region spans residues 19–26 (GHVDHGKT). 19–26 (GHVDHGKT) contacts GTP. Thr26 contributes to the Mg(2+) binding site. The G2 stretch occupies residues 60–64 (GITIN). Residues 81-84 (DCPG) form a G3 region. GTP-binding positions include 81 to 85 (DCPGH) and 136 to 139 (NKAD). Residues 136–139 (NKAD) form a G4 region. A G5 region spans residues 174 to 176 (SAL).

The protein belongs to the TRAFAC class translation factor GTPase superfamily. Classic translation factor GTPase family. EF-Tu/EF-1A subfamily. Monomer.

The protein resides in the cytoplasm. The catalysed reaction is GTP + H2O = GDP + phosphate + H(+). Its function is as follows. GTP hydrolase that promotes the GTP-dependent binding of aminoacyl-tRNA to the A-site of ribosomes during protein biosynthesis. The protein is Elongation factor Tu 1 of Nitrosomonas eutropha (strain DSM 101675 / C91 / Nm57).